A 388-amino-acid polypeptide reads, in one-letter code: Succinate--CoA ligase [ADP-forming] subunit beta (388 aa).

The region spanning 9–244 (KQLFAEFGLP…PSQEDKREAH (236 aa)) is the ATP-grasp domain. ATP contacts are provided by residues Lys-46, 53–55 (GRG), Glu-99, Ser-102, and Glu-107. Mg(2+)-binding residues include Asn-199 and Asp-213. Residues Asn-264 and 321-323 (GIV) each bind substrate.

It belongs to the succinate/malate CoA ligase beta subunit family. As to quaternary structure, heterotetramer of two alpha and two beta subunits. The cofactor is Mg(2+).

It catalyses the reaction succinate + ATP + CoA = succinyl-CoA + ADP + phosphate. It carries out the reaction GTP + succinate + CoA = succinyl-CoA + GDP + phosphate. Its pathway is carbohydrate metabolism; tricarboxylic acid cycle; succinate from succinyl-CoA (ligase route): step 1/1. Functionally, succinyl-CoA synthetase functions in the citric acid cycle (TCA), coupling the hydrolysis of succinyl-CoA to the synthesis of either ATP or GTP and thus represents the only step of substrate-level phosphorylation in the TCA. The beta subunit provides nucleotide specificity of the enzyme and binds the substrate succinate, while the binding sites for coenzyme A and phosphate are found in the alpha subunit. The polypeptide is Succinate--CoA ligase [ADP-forming] subunit beta (Vibrio vulnificus (strain CMCP6)).